The sequence spans 642 residues: Chaperone protein DnaK (642 aa).

Residue Thr198 is modified to Phosphothreonine; by autocatalysis. Residues 602 to 642 (AYAKMTEKQQSDDGAGTQNADHKEDDVVDADFEEVKSDKKD) form a disordered region.

The protein belongs to the heat shock protein 70 family.

Functionally, acts as a chaperone. This is Chaperone protein DnaK from Dichelobacter nodosus (strain VCS1703A).